The primary structure comprises 459 residues: Exodeoxyribonuclease 7 large subunit (459 aa).

Belongs to the XseA family. In terms of assembly, heterooligomer composed of large and small subunits.

Its subcellular location is the cytoplasm. The catalysed reaction is Exonucleolytic cleavage in either 5'- to 3'- or 3'- to 5'-direction to yield nucleoside 5'-phosphates.. Its function is as follows. Bidirectionally degrades single-stranded DNA into large acid-insoluble oligonucleotides, which are then degraded further into small acid-soluble oligonucleotides. This Pseudomonas aeruginosa (strain UCBPP-PA14) protein is Exodeoxyribonuclease 7 large subunit.